A 375-amino-acid polypeptide reads, in one-letter code: Kininogen (375 aa).

The signal sequence occupies residues 1-23 (MKLGVRLCVLVVFSLQLWGPGQG). Cystatin kininogen-type domains are found at residues 35–139 (CDDK…VEAP) and 156–260 (VESE…GPLD). An N-linked (GlcNAc) asparagine glycan is attached at Asn74. Disulfide bonds link Cys91/Cys102, Cys115/Cys133, Cys211/Cys223, and Cys234/Cys254. A glycan (N-linked (GlcNAc) asparagine) is linked at Asn235. The interval 283-375 (EVKTTQASTA…LSDLDLLGKK (93 aa)) is disordered.

Post-translationally, N-glycosylated, with sialylated biantennary complex-type glycans. O-glycosylated, sialylated oligosaccharides. In terms of processing, bradykinin is released from kininogen by kallikrein. Post-translationally, the N-terminus is blocked. As to expression, expressed in the skin, liver, intestine, spleen, pancreas and kidney.

The protein resides in the cytoplasm. It is found in the vacuole. Inhibits papain and ficin (cysteine proteinases) but not trypsin (a serine proteinase). This is Kininogen (LOC106584303) from Salmo salar (Atlantic salmon).